We begin with the raw amino-acid sequence, 574 residues long: Septation ring formation regulator EzrA (574 aa).

The Extracellular portion of the chain corresponds to 1 to 7 (MPTGTII). Residues 8-26 (LIVSIVIILIIAYVACLIV) form a helical membrane-spanning segment. Residues 27–574 (RKRNDNLLVA…YEKTREAIRY (548 aa)) are Cytoplasmic-facing. A coiled-coil region spans residues 105-189 (SAKNAIDSID…IEVEFSEFVM (85 aa)).

Belongs to the EzrA family.

Its subcellular location is the cell membrane. Its function is as follows. Negative regulator of FtsZ ring formation; modulates the frequency and position of FtsZ ring formation. Inhibits FtsZ ring formation at polar sites. Interacts either with FtsZ or with one of its binding partners to promote depolymerization. The protein is Septation ring formation regulator EzrA of Streptococcus suis (strain 98HAH33).